The primary structure comprises 143 residues: Ribosome maturation factor RimP (143 aa).

It belongs to the RimP family.

Its subcellular location is the cytoplasm. In terms of biological role, required for maturation of 30S ribosomal subunits. The sequence is that of Ribosome maturation factor RimP from Borrelia turicatae (strain 91E135).